The sequence spans 504 residues: MADFVASIDQGTTSTRAMIFNHRGEEVGRHQLEHQQLLPRAGWVEHNPVEIWERTWSVLATSLNVTGLSAGDLAAVGVTNQRETTLVWNRHTGRPYCNAIVWQDTRTDKIAAALDRDGRGDIIRRKAGLPPATYFSGGKLQWILENVEGVRRDAENGDALFGTPDSWVIWNLTGGVRSGVHVTDVTNASRTMLMNLETLDWDDELLSFFSIPRQMLPPIKASSPVEPFGFTTQLGPLGGEVPIAGDLGDQQAAMVGQVCLNPGEAKNTYGTGNFLLLNTGEELVHSSNGLLTTVCYQFGDNKPVYALEGSIAVTGSAVQWLRDQLGIISGASQSEDLARQVEDNGGVYFVPAFSGLFAPYWRSDARGAIVGLSRFNTNAHLARATLEAICYQSREVVEAMEADSGVRMEVLKVDGGITANKLCMQIQADTLGVDVVKPVVAETTALGAAYAAGLAVGFWKDADDLRRNWQEDERWSSSITDEKRAEGFAGWKKAVQRTLDGVDV.

Thr12 provides a ligand contact to ADP. Positions 12, 13, and 14 each coordinate ATP. Thr12 is a binding site for sn-glycerol 3-phosphate. Arg16 is a binding site for ADP. Sn-glycerol 3-phosphate is bound by residues Arg82, Glu83, Tyr134, and Asp249. Residues Arg82, Glu83, Tyr134, Asp249, and Gln250 each coordinate glycerol. Residues Thr271 and Gly315 each contribute to the ADP site. Thr271, Gly315, Gln319, and Gly416 together coordinate ATP. Gly416 and Asn420 together coordinate ADP.

Belongs to the FGGY kinase family.

The catalysed reaction is glycerol + ATP = sn-glycerol 3-phosphate + ADP + H(+). It functions in the pathway polyol metabolism; glycerol degradation via glycerol kinase pathway; sn-glycerol 3-phosphate from glycerol: step 1/1. Its activity is regulated as follows. Inhibited by fructose 1,6-bisphosphate (FBP). Its function is as follows. Key enzyme in the regulation of glycerol uptake and metabolism. Catalyzes the phosphorylation of glycerol to yield sn-glycerol 3-phosphate. The polypeptide is Glycerol kinase (Mycobacteroides abscessus (strain ATCC 19977 / DSM 44196 / CCUG 20993 / CIP 104536 / JCM 13569 / NCTC 13031 / TMC 1543 / L948) (Mycobacterium abscessus)).